The chain runs to 505 residues: 4-trimethylaminobutyraldehyde dehydrogenase (505 aa).

NAD(+) contacts are provided by residues Lys-191 and 243-247; that span reads GSVPT. Residue Glu-265 is the Proton acceptor of the active site. Catalysis depends on Cys-299, which acts as the Nucleophile. Glu-402 contributes to the NAD(+) binding site.

The protein belongs to the aldehyde dehydrogenase family. As to quaternary structure, homotetramer. In terms of tissue distribution, constitutively expressed in all organs tested: brain, eye, gill, GI, heart, liver, kidney, muscle, skin, testis and ovary.

Its subcellular location is the cytoplasm. It localises to the cytosol. The enzyme catalyses 4-(trimethylamino)butanal + NAD(+) + H2O = 4-(trimethylamino)butanoate + NADH + 2 H(+). It carries out the reaction an aldehyde + NAD(+) + H2O = a carboxylate + NADH + 2 H(+). It functions in the pathway amine and polyamine biosynthesis; carnitine biosynthesis. Functionally, converts gamma-trimethylaminobutyraldehyde into gamma-butyrobetaine with high efficiency (in vitro). Can catalyze the irreversible oxidation of a broad range of aldehydes to the corresponding acids in an NAD-dependent reaction, but with low efficiency. The protein is 4-trimethylaminobutyraldehyde dehydrogenase (aldh9A1) of Oryzias latipes (Japanese rice fish).